A 441-amino-acid chain; its full sequence is Insulinoma-associated protein 1 (441 aa).

Basic residues predominate over residues Met-1 to Lys-12. The tract at residues Met-1–Val-20 is SNAG domain. Disordered regions lie at residues Met-1–Leu-31, Thr-43–Arg-189, Leu-205–Pro-224, and Arg-278–Leu-316. The segment covering Arg-19 to Gly-28 has biased composition (basic and acidic residues). The segment covering Asn-74–Tyr-83 has biased composition (polar residues). The segment covering Val-89–Tyr-98 has biased composition (basic and acidic residues). Low complexity-rich tracts occupy residues Val-138–Ser-147 and Gly-169–Pro-180. The C2H2-type 1 zinc-finger motif lies at Tyr-258–His-280. Positions Ala-292–Thr-302 are enriched in basic and acidic residues. C2H2-type zinc fingers lie at residues Tyr-317–His-339, His-372–His-395, and Tyr-400–His-423.

Belongs to the INSM1 family.

It localises to the nucleus. May act as a transcriptional regulator. Plays a role in noradrenergic neuron, pancreatic and gastrointestinal endocrine cells differentiation during embryonic development. The protein is Insulinoma-associated protein 1 (insm1) of Xenopus tropicalis (Western clawed frog).